A 179-amino-acid polypeptide reads, in one-letter code: Shikimate kinase (179 aa).

Residue 22 to 27 participates in ATP binding; it reads GTGKSS. Ser-26 serves as a coordination point for Mg(2+). Asp-44, Arg-68, and Gly-90 together coordinate substrate. Residue Arg-128 coordinates ATP. Residue Arg-147 coordinates substrate.

Belongs to the shikimate kinase family. In terms of assembly, monomer. Mg(2+) serves as cofactor.

It is found in the cytoplasm. It catalyses the reaction shikimate + ATP = 3-phosphoshikimate + ADP + H(+). The protein operates within metabolic intermediate biosynthesis; chorismate biosynthesis; chorismate from D-erythrose 4-phosphate and phosphoenolpyruvate: step 5/7. In terms of biological role, catalyzes the specific phosphorylation of the 3-hydroxyl group of shikimic acid using ATP as a cosubstrate. This is Shikimate kinase from Geobacter metallireducens (strain ATCC 53774 / DSM 7210 / GS-15).